The following is a 203-amino-acid chain: Ras-related protein RABD2a (203 aa).

GTP is bound by residues 15–23, 33–40, 63–67, 121–124, and 151–153; these read GDSGVGKSC, YVESYIST, DTAGQ, NKSD, and SAK. The Effector region signature appears at 37–45; it reads YISTIGVDF. A disordered region spans residues 176–203; that stretch reads QPAGNNARPPTVQIRGQPVAQKNGCCST. 2 S-geranylgeranyl cysteine lipidation sites follow: Cys-200 and Cys-201.

Belongs to the small GTPase superfamily. Rab family. As to quaternary structure, does not interact with GC5.

The protein localises to the golgi apparatus. The protein resides in the trans-Golgi network membrane. It localises to the golgi apparatus membrane. In terms of biological role, protein transport. Regulator of membrane traffic from the Golgi apparatus towards the endoplasmic reticulum (ER). The polypeptide is Ras-related protein RABD2a (RABD2A) (Arabidopsis thaliana (Mouse-ear cress)).